An 84-amino-acid chain; its full sequence is Esculentin-1Vb (84 aa).

The first 22 residues, 1-22 (MFTLKKPLLLIVLLGIISLSLC), serve as a signal peptide directing secretion. Residues 23-36 (EQERNADEDEESET) constitute a propeptide that is removed on maturation. An intrachain disulfide couples Cys78 to Cys84.

In terms of tissue distribution, expressed by the skin glands.

The protein localises to the secreted. Antimicrobial peptide. The sequence is that of Esculentin-1Vb from Odorrana versabilis (Chinese bamboo leaf odorous frog).